A 444-amino-acid polypeptide reads, in one-letter code: ATP-dependent protease ATPase subunit HslU (444 aa).

ATP-binding positions include Ile-20 and 62–67 (GVGKTE). Residues 130-158 (EDRILDALVPPPRGASGEPERGEDNSARQ) form a disordered region. Residues Asp-257, Glu-322, and Arg-394 each coordinate ATP.

This sequence belongs to the ClpX chaperone family. HslU subfamily. A double ring-shaped homohexamer of HslV is capped on each side by a ring-shaped HslU homohexamer. The assembly of the HslU/HslV complex is dependent on binding of ATP.

It localises to the cytoplasm. Its function is as follows. ATPase subunit of a proteasome-like degradation complex; this subunit has chaperone activity. The binding of ATP and its subsequent hydrolysis by HslU are essential for unfolding of protein substrates subsequently hydrolyzed by HslV. HslU recognizes the N-terminal part of its protein substrates and unfolds these before they are guided to HslV for hydrolysis. The sequence is that of ATP-dependent protease ATPase subunit HslU from Bordetella bronchiseptica (strain ATCC BAA-588 / NCTC 13252 / RB50) (Alcaligenes bronchisepticus).